Consider the following 295-residue polypeptide: MDSSPVSARFDIFEIYRRFCAIRSGQQLCNKKPCDGEESQRFNLSKEAITQLLYLVENKFQARNSIFDELFKLMSRLDLMVDFTEFTCFYDFVFFMCRENGQKNITISRAITAWKLVLAGRFRLLNRWCDFIEKNQRHNISEDTWQQVLAFSRCVHENLEGYDSEGAWPVLIDDFVEHMYSILGPNKDTSLFCKCGDTESESCLYQEDEHHKDYRRPHTGLRNIPGLKRKTSKKNDEEEEDEDEEVLETQNSSSLLNFKRIKTSNSPRCSSKSPCSIERSLSQGFASLLSTGDKP.

The DCUN1 domain occupies 1–180 (MDSSPVSARF…LIDDFVEHMY (180 aa)). Positions 214–221 (YRRPHTGL) match the Nuclear localization signal motif. A disordered region spans residues 214-251 (YRRPHTGLRNIPGLKRKTSKKNDEEEEDEDEEVLETQN). The span at 237-247 (EEEEDEDEEVL) shows a compositional bias: acidic residues.

The protein localises to the nucleus. May contribute to the neddylation of all cullins by transferring NEDD8 from N-terminally acetylated NEDD8-conjugating E2s enzyme to different cullin C-terminal domain-RBX complexes; neddylation of cullins play an essential role in the regulation of SCF-type complexes activity. Regulates responses to the synthetic auxin 2,4-dichlorophenoxyacetic acid (2,4-D) in roots, probably by modulating the SCF(TIR1) ubiquitin E3 ligase complex-mediated proteolysis. This chain is Defective in cullin neddylation protein AAR3, found in Arabidopsis thaliana (Mouse-ear cress).